Reading from the N-terminus, the 975-residue chain is Glycine dehydrogenase (decarboxylating) (975 aa).

Lys723 bears the N6-(pyridoxal phosphate)lysine mark.

Belongs to the GcvP family. As to quaternary structure, the glycine cleavage system is composed of four proteins: P, T, L and H. Pyridoxal 5'-phosphate serves as cofactor.

The enzyme catalyses N(6)-[(R)-lipoyl]-L-lysyl-[glycine-cleavage complex H protein] + glycine + H(+) = N(6)-[(R)-S(8)-aminomethyldihydrolipoyl]-L-lysyl-[glycine-cleavage complex H protein] + CO2. Functionally, the glycine cleavage system catalyzes the degradation of glycine. The P protein binds the alpha-amino group of glycine through its pyridoxal phosphate cofactor; CO(2) is released and the remaining methylamine moiety is then transferred to the lipoamide cofactor of the H protein. This chain is Glycine dehydrogenase (decarboxylating), found in Burkholderia ambifaria (strain MC40-6).